A 30-amino-acid polypeptide reads, in one-letter code: uncharacterized protein (30 aa).

This is an uncharacterized protein from Treponema pallidum (strain Nichols).